The primary structure comprises 102 residues: uncharacterized protein (102 aa).

A disordered region spans residues 77–102; the sequence is RKDGDEKSKPNSKDYASRPIRDHSKI.

This is an uncharacterized protein from Microplitis demolitor (Parasitoid wasp).